A 313-amino-acid chain; its full sequence is Serine/threonine-protein phosphatase PP2A-3 catalytic subunit (313 aa).

Mn(2+) is bound by residues Asp61, His63, Asp89, and Asn121. The active-site Proton donor is His122. His171 and His245 together coordinate Mn(2+). At Leu313 the chain carries Leucine methyl ester.

The protein belongs to the PPP phosphatase family. PP-2A subfamily. PP2A consists of a common heterodimeric core enzyme, composed of a 36 kDa catalytic subunit (subunit C) and a 65 kDa constant regulatory subunit (subunit A), that associates with a variety of regulatory subunits such as subunits B (the R2/B/PR55/B55, R3/B''/PR72/PR130/PR59 and R5/B'/B56 families). Interacts with ACR4. Interacts with TAP46. Interacts with SIC/RON3. Mn(2+) serves as cofactor. Reversibly methyl esterified on Leu-313 by leucine carboxyl methyltransferase 1 (LCMT1) and pectin methylesterase 1 (PME1). Carboxyl methylation influences the affinity of the catalytic subunit for the different regulatory subunits, thereby modulating the PP2A holoenzyme's substrate specificity, enzyme activity and cellular localization. Post-translationally, phosphorylation of either threonine (by autophosphorylation-activated protein kinase) or tyrosine results in inactivation of the phosphatase. Auto-dephosphorylation has been suggested as a mechanism for reactivation.

It is found in the cytoplasm. It catalyses the reaction O-phospho-L-seryl-[protein] + H2O = L-seryl-[protein] + phosphate. The enzyme catalyses O-phospho-L-threonyl-[protein] + H2O = L-threonyl-[protein] + phosphate. In terms of biological role, functions redundantly with PP2A4, and is involved in establishing auxin gradients, apical-basal axis of polarity and root and shoot apical meristem during embryogenesis. May dephosphorylate PIN1 and regulate its subcellular distribution for polar auxin transport. Involved in the regulation of formative cell division in roots by dephosphorylating ACR4 protein kinase. This is Serine/threonine-protein phosphatase PP2A-3 catalytic subunit from Arabidopsis thaliana (Mouse-ear cress).